The chain runs to 493 residues: Non-cyanogenic beta-glucosidase (493 aa).

The signal sequence occupies residues 1 to 18 (MDFIVAIFALFVISSFTI). N-linked (GlcNAc...) asparagine glycosylation is present at N34. A beta-D-glucoside contacts are provided by residues Q54, H158, and 203 to 204 (NE). E204 functions as the Proton donor in the catalytic mechanism. Residue N335 is glycosylated (N-linked (GlcNAc...) asparagine). An a beta-D-glucoside-binding site is contributed by Y346. N-linked (GlcNAc...) asparagine glycosylation is found at N371 and N412. A beta-D-glucoside-binding positions include E422, W471, 478–479 (EW), and F487. Residue E422 is the Nucleophile of the active site.

The protein belongs to the glycosyl hydrolase 1 family. Leaves.

The catalysed reaction is Hydrolysis of terminal, non-reducing beta-D-glucosyl residues with release of beta-D-glucose.. The protein is Non-cyanogenic beta-glucosidase of Trifolium repens (Creeping white clover).